A 287-amino-acid chain; its full sequence is AA14 family lytic polysaccharide monooxygenase A (287 aa).

The N-terminal stretch at 1–18 (MLRILTLSILATSKLASA) is a signal peptide. N33, N83, and N137 each carry an N-linked (GlcNAc...) asparagine glycan. Cystine bridges form between C188–C193, C195–C216, and C236–C243. Residue N238 is glycosylated (N-linked (GlcNAc...) asparagine).

Belongs to the polysaccharide monooxygenase AA14 family. Cu(2+) is required as a cofactor.

The protein localises to the secreted. Functionally, lytic polysaccharide monooxygenase (LPMO) that has a broad substrate specificity with strong oxidative activity on pure amorphous cellulose and xyloglucan and plays as a bifunctional enzyme to decompose some specific network structures formed between cellulose and hemicellulose in the plant cell walls. Catalysis by LPMOs requires the reduction of the active-site copper from Cu(II) to Cu(I) by a reducing agent and H(2)O(2) or O(2) as a cosubstrate. Simultaneously oxidizes cellulose, xylan and xyloglucan in natural hemi/cellulosic substrate such as fibrillated eucalyptus pulp, and releases native and oxidized cello-oligosaccharides, xylo-oligosaccharides and xyloglucan oligosaccharides from this substrate. The cellulolytic/hemicellulolytic activity becomes weaker as the contents of xylan increase in the alkaline-extracted hemi/cellulosic substrates. This Talaromyces rugulosus (Penicillium rugulosum) protein is AA14 family lytic polysaccharide monooxygenase A.